The sequence spans 630 residues: Chaperone protein HtpG (630 aa).

An a; substrate-binding region spans residues 1–336 (MTTTVEQTAE…TADLPLNVSR (336 aa)). The tract at residues 337 to 551 (EMIQESPILA…EDGYDRQMEK (215 aa)) is b. Residues 552 to 630 (ILQNAGRLQG…VFERSVRSEG (79 aa)) form a c region.

It belongs to the heat shock protein 90 family. As to quaternary structure, homodimer.

The protein resides in the cytoplasm. Molecular chaperone. Has ATPase activity. The chain is Chaperone protein HtpG from Rhizobium etli (strain ATCC 51251 / DSM 11541 / JCM 21823 / NBRC 15573 / CFN 42).